Reading from the N-terminus, the 126-residue chain is Fluoride-specific ion channel FluC (126 aa).

4 consecutive transmembrane segments (helical) span residues L2 to I22, V37 to A57, L65 to L85, and A99 to M119. Na(+) contacts are provided by G75 and T78.

Belongs to the fluoride channel Fluc/FEX (TC 1.A.43) family.

Its subcellular location is the cell inner membrane. It carries out the reaction fluoride(in) = fluoride(out). With respect to regulation, na(+) is not transported, but it plays an essential structural role and its presence is essential for fluoride channel function. Functionally, fluoride-specific ion channel. Important for reducing fluoride concentration in the cell, thus reducing its toxicity. This Ruegeria sp. (strain TM1040) (Silicibacter sp.) protein is Fluoride-specific ion channel FluC.